We begin with the raw amino-acid sequence, 648 residues long: Actin-related protein 5 (648 aa).

The segment at 34 to 59 (LTKPRKDRKKEAAASEGSASQTTVEQ) is disordered. 2 coiled-coil regions span residues 277–311 (TAEQ…EQQL) and 340–364 (TLED…RAQS). Disordered regions lie at residues 357–385 (RAQE…PEGM) and 403–455 (GRKQ…GMND). Residues 414-428 (EQAKRHTHAAQERMR) show a composition bias toward basic and acidic residues. Phosphoserine occurs at positions 471 and 473.

This sequence belongs to the actin family. ARP5 subfamily. Component of the chromatin remodeling Ino80 complex.

The protein localises to the nucleus. Proposed core component of the chromatin remodeling Ino80 complex which is involved in transcriptional regulation, DNA replication and probably DNA repair. The sequence is that of Actin-related protein 5 from Drosophila melanogaster (Fruit fly).